Here is a 98-residue protein sequence, read N- to C-terminus: Citrate lyase acyl carrier protein (98 aa).

O-(phosphoribosyl dephospho-coenzyme A)serine is present on Ser-14.

This sequence belongs to the CitD family. Oligomer with a subunit composition of (alpha,beta,gamma)6.

Its subcellular location is the cytoplasm. In terms of biological role, covalent carrier of the coenzyme of citrate lyase. The polypeptide is Citrate lyase acyl carrier protein (Shigella boydii serotype 18 (strain CDC 3083-94 / BS512)).